A 276-amino-acid polypeptide reads, in one-letter code: Large ribosomal subunit protein uL2 (276 aa).

The interval 223-276 (VVMNPVDHPHGGGEGKSSGGRHPVSPWGKKTRGPKTRNNKVTDRLIIRRRNAKR) is disordered. Over residues 251–260 (KKTRGPKTRN) the composition is skewed to basic residues.

This sequence belongs to the universal ribosomal protein uL2 family. As to quaternary structure, part of the 50S ribosomal subunit. Forms a bridge to the 30S subunit in the 70S ribosome.

Functionally, one of the primary rRNA binding proteins. Required for association of the 30S and 50S subunits to form the 70S ribosome, for tRNA binding and peptide bond formation. It has been suggested to have peptidyltransferase activity; this is somewhat controversial. Makes several contacts with the 16S rRNA in the 70S ribosome. The chain is Large ribosomal subunit protein uL2 from Hyphomonas neptunium (strain ATCC 15444).